A 1977-amino-acid polypeptide reads, in one-letter code: Voltage-dependent L-type calcium channel subunit alpha-1F (1977 aa).

A compositionally biased stretch (basic and acidic residues) spans 1–11 (MSESEGGKDTT). Positions 1 to 60 (MSESEGGKDTTPEPSPANGAGPGPEWGLCPGPPAVEGESSGASGLGTPKRRNQHSKHKTV) are disordered. At 1-92 (MSESEGGKDT…RSCISIVEWK (92 aa)) the chain is on the cytoplasmic side. Over residues 48–59 (PKRRNQHSKHKT) the composition is skewed to basic residues. Residues 79–375 (NPLRRSCISI…LVLGVLSGEF (297 aa)) form an I repeat. The chain crosses the membrane as a helical span at residues 93–111 (PFDILILLTIFANCVALGV). The Extracellular portion of the chain corresponds to 112–129 (YIPFPEDDSNTANHNLEQ). The helical transmembrane segment at 130 to 149 (VEYVFLVIFTVETVLKIVAY) threads the bilayer. Residues 150–161 (GLVLHPSAYIRN) are Cytoplasmic-facing. A helical transmembrane segment spans residues 162–180 (GWNLLDFIIVVVGLFSVLL). Topologically, residues 181 to 201 (EQGPGRPGDAPHTGGKPGGFD) are extracellular. Residues 202–220 (VKALRAFRVLRPLRLVSGV) traverse the membrane as a helical segment. Residues 221–239 (PSLHIVLNSIMKALVPLLH) lie on the Cytoplasmic side of the membrane. The chain crosses the membrane as a helical span at residues 240-259 (IALLVLFVIIIYAIIGLELF). At 260–347 (LGRMHKTCYF…WMQDAMGYEL (88 aa)) the chain is on the extracellular side. An N-linked (GlcNAc...) asparagine glycan is attached at Asn-295. A Ca(2+)-binding site is contributed by Glu-330. A helical membrane pass occupies residues 348 to 372 (PWVYFVSLVIFGSFFVLNLVLGVLS). The Cytoplasmic segment spans residues 373–529 (GEFSKEREKA…ARCRRAVKSN (157 aa)). The segment at 395-412 (QQMEEDLRGYLDWITQAE) is binding to the beta subunit. Disordered stretches follow at residues 418 to 441 (DPSADDNLGSMAEEGRAGHRPQLA) and 455 to 488 (SHSTRSTHSTSSHASLPASDTGSMTETQGDEDEE). The span at 455-469 (SHSTRSTHSTSSHAS) shows a compositional bias: low complexity. The II repeat unit spans residues 515–761 (NRVLRARCRR…VFLAIAVDNL (247 aa)). Residues 530–549 (ACYWAVLLLVFLNTLTIASE) form a helical membrane-spanning segment. Residues 550-564 (HHGQPVWLTQIQEYA) are Extracellular-facing. Residues 565-583 (NKVLLCLFTVEMLLKLYGL) traverse the membrane as a helical segment. The Cytoplasmic segment spans residues 584–591 (GPSAYVSS). Residues 592–610 (FFNRFDCFVVCGGILETTL) traverse the membrane as a helical segment. Residues 611–620 (VEVGAMQPLG) lie on the Extracellular side of the membrane. The chain crosses the membrane as a helical span at residues 621–639 (ISVLRCVRLLRIFKVTRHW). Topologically, residues 640 to 658 (ASLSNLVASLLNSMKSIAS) are cytoplasmic. A helical membrane pass occupies residues 659 to 679 (LLLLLFLFIIIFSLLGMQLFG). The Extracellular segment spans residues 680-733 (GKFNFDQTHTKRSTFDTFPQALLTVFQILTGEDWNVVMYDGIMAYGGPFFPGML). Glu-711 contributes to the Ca(2+) binding site. Residues 734–758 (VCIYFIILFICGNYILLNVFLAIAV) traverse the membrane as a helical segment. The Cytoplasmic portion of the chain corresponds to 759 to 871 (DNLASGDAGT…KGCHTLIHHH (113 aa)). Residues 767 to 830 (GTAKDKGGEK…EEEEEGAGGV (64 aa)) form a disordered region. Basic and acidic residues predominate over residues 768–783 (TAKDKGGEKSNEKDLP). The span at 807-826 (DMEEEEEEEEEEEEEEEEEG) shows a compositional bias: acidic residues. Residues 858-1140 (NPLRKGCHTL…IFVGFVIITF (283 aa)) form an III repeat. A helical membrane pass occupies residues 872-890 (VFTNLILVFIILSSVSLAA). Over 891–906 (EDPIRAHSFRNHILGY) the chain is Extracellular. A helical transmembrane segment spans residues 907 to 926 (FDYAFTSIFTVEILLKMTVF). The Cytoplasmic segment spans residues 927–938 (GAFLHRGSFCRS). The helical transmembrane segment at 939–957 (WFNMLDLLVVSVSLISFGI) threads the bilayer. Over 958 to 963 (HSSAIS) the chain is Extracellular. A helical transmembrane segment spans residues 964–983 (VVKILRVLRVLRPLRAINRA). Residues 984–1002 (KGLKHVVQCVFVAIRTIGN) lie on the Cytoplasmic side of the membrane. The helical transmembrane segment at 1003–1022 (IMIVTTLLQFMFACIGVQLF) threads the bilayer. Over 1023–1112 (KGKFYTCTDE…HGPIYNYRVE (90 aa)) the chain is Extracellular. Residues 1060-1150 (RLWVNSDFNF…RAQGEQEYQN (91 aa)) form a dihydropyridine binding region. Glu-1086 is a binding site for Ca(2+). A helical membrane pass occupies residues 1113-1133 (ISVFFIVYIIIIAFFMMNIFV). Residues 1134 to 1190 (GFVIITFRAQGEQEYQNCELDKNQRQCVEYALKAQPLRRYIPKNPHQYRVWATVNSA) are Cytoplasmic-facing. The IV repeat unit spans residues 1177 to 1444 (NPHQYRVWAT…LFVAVIMDNF (268 aa)). The chain crosses the membrane as a helical span at residues 1191 to 1209 (AFEYLMFLLILLNTVALAM). The Extracellular portion of the chain corresponds to 1210 to 1224 (QHYEQTAPFNYAMDI). A helical membrane pass occupies residues 1225–1244 (LNMVFTGLFTIEMVLKIIAF). The Cytoplasmic portion of the chain corresponds to 1245-1251 (KPKHYFT). Residues 1252 to 1273 (DAWNTFDALIVVGSIVDIAVTE) form a helical membrane-spanning segment. The Extracellular portion of the chain corresponds to 1274–1290 (VNNGGHLGESSEDSSRI). The helical transmembrane segment at 1291-1310 (SITFFRLFRVMRLVKLLSKG) threads the bilayer. Residues 1311–1329 (EGIRTLLWTFIKSFQALPY) are Cytoplasmic-facing. Residues 1330–1349 (VALLIAMIFFIYAVIGMQMF) form a helical membrane-spanning segment. Residues 1350–1416 (GKVALQDGTQ…GEEFTCGSNF (67 aa)) are Extracellular-facing. A dihydropyridine binding region spans residues 1397 to 1463 (RCDPESDFGP…LGPHHLDEFK (67 aa)). The segment at 1409-1452 (EFTCGSNFAIAYFISFFMLCAFLIINLFVAVIMDNFDYLTRDWS) is phenylalkylamine binding. The helical transmembrane segment at 1417 to 1441 (AIAYFISFFMLCAFLIINLFVAVIM) threads the bilayer. Over 1442-1977 (DNFDYLTRDW…GDEMACVHAL (536 aa)) the chain is Cytoplasmic. 2 disordered regions span residues 1637–1754 (CDTE…EVPD) and 1816–1841 (DLPIPGTYHRGRNSGPNRAQGSWATP). Residues 1638–1657 (DTEEEEEEGQEGVEEEDEKD) show a composition bias toward acidic residues. Polar residues-rich tracts occupy residues 1661–1670 (NKATMVSQPS), 1702–1716 (TPTSSQPSVPQAGSN), 1733–1743 (GNSQPKGTKGQ), and 1829–1840 (SGPNRAQGSWAT).

This sequence belongs to the calcium channel alpha-1 subunit (TC 1.A.1.11) family. CACNA1F subfamily. In terms of assembly, voltage-dependent calcium channels are multisubunit complexes, consisting of alpha-1, alpha-2, beta and delta subunits in a 1:1:1:1 ratio. The channel activity is directed by the pore-forming and voltage-sensitive alpha-1 subunit. In many cases, this subunit is sufficient to generate voltage-sensitive calcium channel activity. The auxiliary subunits beta and alpha-2/delta linked by a disulfide bridge regulate the channel activity. Interacts (via IQ domain) with CABP4; in a calcium independent manner. As to quaternary structure, interacts with CABP4; suppresses robust calcium-dependent inactivation of channel without enhancing the hyperpolarized voltage-dependent activation. As to expression, expression in skeletal muscle and retina. Isoform 4 is expressed in retina.

The protein resides in the membrane. The catalysed reaction is Ca(2+)(in) = Ca(2+)(out). Its function is as follows. Voltage-sensitive calcium channels (VSCC) mediate the entry of calcium ions into excitable cells and are also involved in a variety of calcium-dependent processes, including muscle contraction, hormone or neurotransmitter release, gene expression, cell motility, cell division and cell death. The isoform alpha-1F gives rise to L-type calcium currents. Long-lasting (L-type) calcium channels belong to the 'high-voltage activated' (HVA) group. They are blocked by dihydropyridines (DHP), phenylalkylamines, and by benzothiazepines. Activates at more negative voltages and does not undergo calcium-dependent inactivation (CDI), due to incoming calcium ions, during depolarization. In terms of biological role, voltage-dependent L-type calcium channel activates at more hyperpolarized voltages and exhibits a robust calcium-dependent inactivation (CDI), due to incoming calcium ions, during depolarizations. Voltage-sensitive calcium channels (VSCC) mediate the entry of calcium ions into excitable cells and are also involved in a variety of calcium-dependent processes, including muscle contraction, hormone or neurotransmitter release, gene expression, cell motility, cell division and cell death. The sequence is that of Voltage-dependent L-type calcium channel subunit alpha-1F from Homo sapiens (Human).